The sequence spans 765 residues: Transient receptor potential cation channel subfamily V member 6 (765 aa).

Topologically, residues 1–367 (MGPLQGDGGP…SLKWKRYGRP (367 aa)) are cytoplasmic. 3 ANK repeats span residues 84-114 (IWESPLLLAAKDNDVQALNKLLKYEDCKVHQ), 118-147 (MGETALHIAALYDNLEAAMVLMEAAPELVF), and 156-185 (EGQTALHIAVVNQNMNLVRALLARRASVSA). The interval 133-143 (EAAMVLMEAAP) is interaction with calmodulin. Y201 is modified (phosphotyrosine; by SRC). ANK repeat units follow at residues 202 to 231 (FGEHPLSFAACVNSEEIVRLLIEHGADIRA), 235 to 277 (LGNT…LVPN), and 279 to 308 (QGLTPFKLAGVEGNTVMFQHLMQKRKHTQW). The chain crosses the membrane as a helical span at residues 368 to 388 (YFCMLGAIYLLYIICFTMCCI). Residues 389 to 425 (YRPLKPRTNNRTSPRDNTLLQQKLLQEAYMTPKDDIR) lie on the Extracellular side of the membrane. N398 is a glycosylation site (N-linked (GlcNAc...) asparagine). A helical transmembrane segment spans residues 426–448 (LVGELVTVIGAIIILLVEVPDIF). The Cytoplasmic portion of the chain corresponds to 449–463 (RMGVTRFFGQTILGG). A helical membrane pass occupies residues 464 to 483 (PFHVLIITYAFMVLVTMVMR). The Extracellular portion of the chain corresponds to 484–489 (LISASG). A helical transmembrane segment spans residues 490–509 (EVVPMSFALVLGWCNVMYFA). Over 510 to 529 (RGFQMLGPFTIMIQKMIFGD) the chain is Cytoplasmic. A helical membrane pass occupies residues 530–552 (LMRFCWLMAVVILGFASAFYIIF). Residues 553 to 565 (QTEDPEELGHFYD) are Extracellular-facing. Residues 566–585 (YPMALFSTFELFLTIIDGPA) constitute an intramembrane region (pore-forming). The Selectivity filter motif lies at 581-585 (IDGPA). D582 provides a ligand contact to Ca(2+). Over 586-596 (NYNVDLPFMYS) the chain is Extracellular. The helical transmembrane segment at 597-617 (ITYAAFAIIATLLMLNLLIAM) threads the bilayer. The Cytoplasmic portion of the chain corresponds to 618–765 (MGDTHWRVAH…EDGESWEYQI (148 aa)). An interaction with S100A10 region spans residues 638–642 (VATTV). The tract at residues 731-751 (SSANWERLRQGTLRRDLRGII) is interaction with calmodulin. T742 bears the Phosphothreonine; by PKC/PRKCA mark.

The protein belongs to the transient receptor (TC 1.A.4) family. TrpV subfamily. TRPV6 sub-subfamily. Homotetramer. Probably also forms heterotetramers with TRPV5. Interacts with TRPV5. Interacts with S100A10 and probably with the ANAX2-S100A10 heterotetramer. The interaction with S100A10 is required for the trafficking to the plasma membrane. Interacts with BSPRY. Interacts with TCAF1 and TCAF2 isoform 2. Interacts with calmodulin. In terms of processing, glycosylated. Post-translationally, phosphorylation at Tyr-201 by SRC leads to an increased calcium influx through the channel. Probably dephosphorylated at this site by PTPN1. Phosphorylation by PRKCA at the calmodulin binding site delays channel inactivation. Expressed at high levels in the gastrointestinal tract, including esophagus, stomach, duodenum, jejunum, ileum and colon, and in pancreas, placenta, prostate and salivary gland. Expressed at moderate levels in liver, kidney and testis. Expressed in trophoblasts of placenta villus trees (at protein level). Expressed in locally advanced prostate cancer, metastatic and androgen-insensitive prostatic lesions but not detected in healthy prostate tissue and benign prostatic hyperplasia.

It localises to the cell membrane. It carries out the reaction Ca(2+)(in) = Ca(2+)(out). Functionally, calcium selective cation channel that mediates Ca(2+) uptake in various tissues, including the intestine. Important for normal Ca(2+) ion homeostasis in the body, including bone and skin. The channel is activated by low internal calcium level, probably including intracellular calcium store depletion, and the current exhibits an inward rectification. Inactivation includes both a rapid Ca(2+)-dependent and a slower Ca(2+)-calmodulin-dependent mechanism; the latter may be regulated by phosphorylation. In vitro, is slowly inhibited by Mg(2+) in a voltage-independent manner. Heteromeric assembly with TRPV5 seems to modify channel properties. TRPV5-TRPV6 heteromultimeric concatemers exhibit voltage-dependent gating. In Homo sapiens (Human), this protein is Transient receptor potential cation channel subfamily V member 6 (TRPV6).